The sequence spans 394 residues: MSKEKFERTKPHVNVGTIGHVDHGKTTLTAAITTVLAKTYGGSARAFDQIDNAPEEKARGITINTSHVEYDTPSRHYAHVDCPGHADYVKNMITGAAQMDGAILVVAATDGPMPQTREHILLGRQVGVPYMIVFMNKCDMVDDEELLELVEMEVRELLSAYDFPGDDIPVVKGSALKALEGVKEWEDKIIELAGYLDTYIPEPERAVDKPFLLPIEDVFSISGRGTVVTGRVERGIVKVGEEVEIVGIKDTVKSTCTGVEMFRKLLDEGRAGENVGVLLRGIKREDIERGQVLAKPGSIKPHTTFESEVYILSKDEGGRHTPFFKGYRPQFYFRTTDVTGTIELPEGVEMVMPGDNINMVVTLIHPIAMDDGLRFAIREGGRTVGAGVVAKVIA.

Positions K10–E204 constitute a tr-type G domain. A G1 region spans residues G19–T26. Residue G19–T26 participates in GTP binding. A Mg(2+)-binding site is contributed by T26. The interval G60 to N64 is G2. Residues D81 to G84 are G3. Residues D81–H85 and N136–D139 each bind GTP. Positions N136–D139 are G4. The interval S174–L176 is G5.

This sequence belongs to the TRAFAC class translation factor GTPase superfamily. Classic translation factor GTPase family. EF-Tu/EF-1A subfamily. In terms of assembly, monomer.

It localises to the cytoplasm. It catalyses the reaction GTP + H2O = GDP + phosphate + H(+). In terms of biological role, GTP hydrolase that promotes the GTP-dependent binding of aminoacyl-tRNA to the A-site of ribosomes during protein biosynthesis. This Yersinia enterocolitica serotype O:8 / biotype 1B (strain NCTC 13174 / 8081) protein is Elongation factor Tu 2.